Consider the following 473-residue polypeptide: MMLGVYTLLLLWGLATPCLGLLETVGTLARIDKDELGKAIQNSLVGGPILQNVLGTVTSVNQGLLGAGGLLGGGGLLSYGGIFSLVEELSGLKIEELTLPKVSLKLLPGVGVQLNLHTKVSLHGSGPLVGLLQLAAEVNVSSKVALGMSPRGTPILVLKRCSTLLGHISLMSGLLPTPIFGLVEQTLCKVLPGLLCPVVDSVLSVVNELLGATLSLVPLGPLGSVEFTLATLPLISNQYIELDINPIVKSIAGDVIDFPKPRIPVKVPPKEDHTSQVTVPLYLFSTVFGLLQTNGALDLDITPEMVPRNVPLTTTDLAALAPEALGKLPPAQHLLLSLRVTKSPMVLLQNKKATVSIPVTIHVLSSVPQGTPVALFQLNGVMTLNAHLAPSSTKLHISLSLERLSVQLASSFPQPFDASRLEEWLSDVVRAAYMQRLNEHLEVGIPLPKILNVNFANSVVDIIENAVVLTVAP.

An N-terminal signal peptide occupies residues 1-20 (MMLGVYTLLLLWGLATPCLG). N-linked (GlcNAc...) asparagine glycosylation is present at asparagine 139. Residues cysteine 161 and cysteine 196 are joined by a disulfide bond.

This sequence belongs to the BPI/LBP/Plunc superfamily. BPI/LBP family.

It localises to the secreted. In terms of biological role, may have the capacity to recognize and bind specific classes of odorants. May act as a carrier molecule, transporting odorants across the mucus layer to access receptor sites. May serve as a primary defense mechanism by recognizing and removing potentially harmful odorants or pathogenic microorganisms from the mucosa or clearing excess odorant from mucus to enable new odorant stimuli to be received. The sequence is that of BPI fold-containing family B member 3 from Mus musculus (Mouse).